Reading from the N-terminus, the 789-residue chain is GDH/6PGL endoplasmic bifunctional protein (789 aa).

Residues 1 to 16 form the signal peptide; sequence MLLAAMCLALLGCLQA. Position 17 is a pyrrolidone carboxylic acid (Gln17). The segment at 17–524 is hexose-6-phosphate dehydrogenase; that stretch reads QELKGHVSII…GGQLTFSQQQ (508 aa). NADP(+)-binding positions include 29–36 and Tyr146; that span reads GATGDLAK. N-linked (GlcNAc...) asparagine glycosylation occurs at Asn154. Lys171 contacts NADP(+). D-glucose 6-phosphate-binding positions include Lys171, 201 to 205, Glu240, and Asp259; that span reads HYLGK. Position 205 is an N6-succinyllysine (Lys205). His264 functions as the Proton acceptor in the catalytic mechanism. Asn279 carries N-linked (GlcNAc...) asparagine glycosylation. The D-glucose 6-phosphate site is built by Lys357 and Arg362. Arg367 contributes to the NADP(+) binding site. Lys424 carries the post-translational modification N6-succinyllysine. The segment at 525-538 is linker; the sequence is LEVLIPDLGSVPKP. Positions 539 to 789 are 6-phosphogluconolactonase; that stretch reads SDFQVLGARY…WYMDYEAFLG (251 aa). An NADP(+)-binding site is contributed by Trp615. An N-linked (GlcNAc...) asparagine glycan is attached at Asn681.

This sequence in the N-terminal section; belongs to the glucose-6-phosphate dehydrogenase family. The protein in the C-terminal section; belongs to the glucosamine/galactosamine-6-phosphate isomerase family. 6-phosphogluconolactonase subfamily. As to quaternary structure, homodimer. In terms of tissue distribution, expressed in liver (at protein level). Expressed in muscles. Expressed in adipose tissues.

It localises to the endoplasmic reticulum lumen. The catalysed reaction is D-glucose 6-phosphate + NAD(+) = 6-phospho-D-glucono-1,5-lactone + NADH + H(+). It carries out the reaction D-glucose 6-phosphate + NADP(+) = 6-phospho-D-glucono-1,5-lactone + NADPH + H(+). The enzyme catalyses 6-phospho-D-glucono-1,5-lactone + H2O = 6-phospho-D-gluconate + H(+). It catalyses the reaction 2-deoxy-D-glucose 6-phosphate + NAD(+) = 2-deoxy-6-phospho-D-glucono-1,5-lactone + NADH + H(+). The catalysed reaction is 2-deoxy-D-glucose 6-phosphate + NADP(+) = 2-deoxy-6-phospho-D-glucono-1,5-lactone + NADPH + H(+). It carries out the reaction D-galactose 6-phosphate + NADP(+) = 6-phospho-D-galactono-1,5-lactone + NADPH + H(+). The enzyme catalyses D-galactose 6-phosphate + NAD(+) = 6-phospho-D-galactono-1,5-lactone + NADH + H(+). It catalyses the reaction D-glucosamine 6-phosphate + NADP(+) = 2-amino-2-deoxy-6-phospho-D-glucono-1,5-lactone + NADPH + 2 H(+). The catalysed reaction is D-glucose + NAD(+) = D-glucono-1,5-lactone + NADH + H(+). It carries out the reaction D-glucose + NADP(+) = D-glucono-1,5-lactone + NADPH + H(+). The enzyme catalyses D-glucose 6-sulfate + NADP(+) = 6-sulfo-D-glucono-1,5-lactone + NADPH + H(+). Its pathway is carbohydrate degradation; pentose phosphate pathway; D-ribulose 5-phosphate from D-glucose 6-phosphate (oxidative stage). It functions in the pathway carbohydrate degradation; pentose phosphate pathway; D-ribulose 5-phosphate from D-glucose 6-phosphate (oxidative stage): step 2/3. Bifunctional enzyme localized in the lumen of the endoplasmic reticulum that catalyzes the first two steps of the oxidative branch of the pentose phosphate pathway/shunt, an alternative to glycolysis and a major source of reducing power and metabolic intermediates for biosynthetic processes. Has a hexose-6-phosphate dehydrogenase activity, with broad substrate specificity compared to glucose-6-phosphate 1-dehydrogenase/G6PD, and catalyzes the first step of the pentose phosphate pathway. In addition, acts as a 6-phosphogluconolactonase and catalyzes the second step of the pentose phosphate pathway. May have a dehydrogenase activity for alternative substrates including glucosamine 6-phosphate and glucose 6-sulfate. The main function of this enzyme is to provide reducing equivalents such as NADPH to maintain the adequate levels of reductive cofactors in the oxidizing environment of the endoplasmic reticulum. By producing NADPH that is needed by reductases of the lumen of the endoplasmic reticulum like corticosteroid 11-beta-dehydrogenase isozyme 1/HSD11B1, indirectly regulates their activity. In Mus musculus (Mouse), this protein is GDH/6PGL endoplasmic bifunctional protein.